A 262-amino-acid polypeptide reads, in one-letter code: Zinc import ATP-binding protein ZnuC (262 aa).

One can recognise an ABC transporter domain in the interval 4 to 220; sequence LNLSGVRLSH…PEYLALFGPR (217 aa). Residue 36 to 43 coordinates ATP; the sequence is GPNGAGKS. Positions 238–262 are disordered; the sequence is ADGSVLPLAEGGGEPHTHGPGCRHG.

It belongs to the ABC transporter superfamily. Zinc importer (TC 3.A.1.15.5) family. The complex is composed of two ATP-binding proteins (ZnuC), two transmembrane proteins (ZnuB) and a solute-binding protein (ZnuA).

It is found in the cell inner membrane. It catalyses the reaction Zn(2+)(out) + ATP(in) + H2O(in) = Zn(2+)(in) + ADP(in) + phosphate(in) + H(+)(in). Part of the ABC transporter complex ZnuABC involved in zinc import. Responsible for energy coupling to the transport system. The chain is Zinc import ATP-binding protein ZnuC from Paramagnetospirillum magneticum (strain ATCC 700264 / AMB-1) (Magnetospirillum magneticum).